We begin with the raw amino-acid sequence, 133 residues long: Alcohol dehydrogenase, 15 kDa subunit (133 aa).

Positions 1–24 are cleaved as a signal peptide; it reads MFRRIVPVLGLALGLGLASQAAMA. Residues 23 to 43 form a disordered region; the sequence is MAQEQSPPPPPAVQGTPGKDF. Glutamine 25 is modified (pyrrolidone carboxylic acid).

In terms of assembly, the alcohol dehydrogenase multicomponent enzyme system is composed of a dehydrogenase subunit I (AdhA), a cytochrome c subunit II (AdhB) and a subunit III (AdhS).

The protein localises to the cell membrane. Its function is as follows. Part of the alcohol dehydrogenase multicomponent enzyme system which is involved in the production of acetic acid and in the ethanol oxidase respiratory chain. Does not play an obligatory role for the alcohol dehydrogenase (ADH) activity. This Gluconobacter oxydans (strain 621H) (Gluconobacter suboxydans) protein is Alcohol dehydrogenase, 15 kDa subunit.